The sequence spans 1002 residues: UPF0182 protein Mvan_1814 (1002 aa).

7 helical membrane passes run 16–36 (VMIA…RLVD), 61–81 (LLLF…AMAL), 112–132 (LVGI…AQNY), 174–194 (FAAT…FGGI), 209–229 (IQLI…YWLD), 258–278 (KLIL…AIVL), and 286–306 (IGVV…PLVV). Residues 891 to 958 (LFGPGADATA…TGPTQLSAGK (68 aa)) form a disordered region. Over residues 893–923 (GPGADATATGPAATEPPAGQAPQPQGNNQPP) the composition is skewed to low complexity. A compositionally biased stretch (pro residues) spans 937–950 (PQQPEVPVAVPPTG).

This sequence belongs to the UPF0182 family.

It localises to the cell membrane. The sequence is that of UPF0182 protein Mvan_1814 from Mycolicibacterium vanbaalenii (strain DSM 7251 / JCM 13017 / BCRC 16820 / KCTC 9966 / NRRL B-24157 / PYR-1) (Mycobacterium vanbaalenii).